A 508-amino-acid polypeptide reads, in one-letter code: Lysine--tRNA ligase (508 aa).

Mg(2+)-binding residues include Glu-418 and Glu-425.

The protein belongs to the class-II aminoacyl-tRNA synthetase family. In terms of assembly, homodimer. Requires Mg(2+) as cofactor.

It is found in the cytoplasm. It catalyses the reaction tRNA(Lys) + L-lysine + ATP = L-lysyl-tRNA(Lys) + AMP + diphosphate. In Burkholderia multivorans (strain ATCC 17616 / 249), this protein is Lysine--tRNA ligase.